A 143-amino-acid polypeptide reads, in one-letter code: Root meristem growth factor 10 (143 aa).

The N-terminal stretch at 1 to 27 (MDMLRSACFYFLLIVFVILSWSLLCDS) is a signal peptide. A propeptide spanning residues 28 to 130 (RHLGHMEKKL…SDQEHPGFNL (103 aa)) is cleaved from the precursor. N-linked (GlcNAc...) asparagine glycosylation is present at Asn-60. Positions 74-83 (NHGDNGQING) are enriched in polar residues. The segment at 74–143 (NHGDNGQING…QPTTHPPHHN (70 aa)) is disordered. The short motif at 92 to 99 (VKRASDKK) is the Nuclear localization signal element. Tyr-132 carries the post-translational modification Sulfotyrosine. Hydroxyproline is present on Pro-140.

It belongs to the RGF family. As to quaternary structure, binds to LRR receptor-like serine/threonine-protein kinases RGI1, RGI2 and RGI3 to trigger their dimerization with SERK proteins and subsequent signaling. In terms of processing, the tyrosine sulfation is critical for the function of the peptide. Expressed in root tips.

Its subcellular location is the secreted. The protein resides in the nucleus. In terms of biological role, maintains the postembryonic root stem cell niche by regulating the expression levels and patterns of the transcription factor PLETHORA (PLT), mainly at the post-transcriptional level. Promotes root elongation. The polypeptide is Root meristem growth factor 10 (Arabidopsis thaliana (Mouse-ear cress)).